The chain runs to 20 residues: Succinate--CoA ligase [ADP-forming] subunit beta, mitochondrial (20 aa).

The ATP-grasp domain occupies 8–20 (SMELLQEAGVSIP).

The protein belongs to the succinate/malate CoA ligase beta subunit family. ATP-specific subunit beta subfamily. In terms of assembly, heterodimer of an alpha and a beta subunit. The beta subunit determines specificity for ATP. Interacts with ALAS2.

It localises to the mitochondrion. It carries out the reaction succinate + ATP + CoA = succinyl-CoA + ADP + phosphate. It functions in the pathway carbohydrate metabolism; tricarboxylic acid cycle; succinate from succinyl-CoA (ligase route): step 1/1. Its function is as follows. ATP-specific succinyl-CoA synthetase functions in the citric acid cycle (TCA), coupling the hydrolysis of succinyl-CoA to the synthesis of ATP and thus represents the only step of substrate-level phosphorylation in the TCA. The beta subunit provides nucleotide specificity of the enzyme and binds the substrate succinate, while the binding sites for coenzyme A and phosphate are found in the alpha subunit. The polypeptide is Succinate--CoA ligase [ADP-forming] subunit beta, mitochondrial (Canis lupus familiaris (Dog)).